The following is a 615-amino-acid chain: DNA mismatch repair protein MutL (615 aa).

Residues 363–397 form a disordered region; sequence FAEPAAREPVAPRYTPAPASGSRPAAPWPNAQPGY. Over residues 364–391 the composition is skewed to low complexity; that stretch reads AEPAAREPVAPRYTPAPASGSRPAAPWP.

The protein belongs to the DNA mismatch repair MutL/HexB family.

Its function is as follows. This protein is involved in the repair of mismatches in DNA. It is required for dam-dependent methyl-directed DNA mismatch repair. May act as a 'molecular matchmaker', a protein that promotes the formation of a stable complex between two or more DNA-binding proteins in an ATP-dependent manner without itself being part of a final effector complex. The sequence is that of DNA mismatch repair protein MutL from Escherichia coli O8 (strain IAI1).